The primary structure comprises 55 residues: MKPVSRRTLDWIYSVLLLAIVLISWGCIIYASMVSARRQLRKKYPDKIFGTNENL.

The chain crosses the membrane as a helical span at residues 11-31 (WIYSVLLLAIVLISWGCIIYA).

Its subcellular location is the membrane. The chain is Small integral membrane protein 27 from Homo sapiens (Human).